The sequence spans 128 residues: Histone H2A type 1-H (128 aa).

Residues 1–22 (MSGRGKQGGKARAKAKTRSSRA) form a disordered region. Ser2 carries the N-acetylserine modification. Ser2 carries the post-translational modification Phosphoserine; by RPS6KA5. A Citrulline; alternate modification is found at Arg4. Symmetric dimethylarginine; by PRMT5; alternate is present on Arg4. At Lys6 the chain carries N6-(2-hydroxyisobutyryl)lysine. Over residues 7 to 19 (QGGKARAKAKTRS) the composition is skewed to basic residues. At Lys10 the chain carries N6-(2-hydroxyisobutyryl)lysine; alternate. N6-(beta-hydroxybutyryl)lysine; alternate occurs at positions 10 and 14. The residue at position 10 (Lys10) is an N6-lactoyllysine; alternate. Lys10 carries the N6-succinyllysine; alternate modification. Lys14 is covalently cross-linked (Glycyl lysine isopeptide (Lys-Gly) (interchain with G-Cter in ubiquitin); alternate). Lys16 is covalently cross-linked (Glycyl lysine isopeptide (Lys-Gly) (interchain with G-Cter in ubiquitin)). An N6-(2-hydroxyisobutyryl)lysine; alternate modification is found at Lys37. The residue at position 37 (Lys37) is an N6-(beta-hydroxybutyryl)lysine; alternate. At Lys37 the chain carries N6-crotonyllysine; alternate. An N6-(2-hydroxyisobutyryl)lysine mark is found at Lys75 and Lys76. Lys96 bears the N6-(2-hydroxyisobutyryl)lysine; alternate mark. Lys96 bears the N6-(beta-hydroxybutyryl)lysine; alternate mark. Residue Lys96 is modified to N6-succinyllysine; alternate. Lys96 carries the N6-glutaryllysine; alternate modification. The residue at position 100 (Lys100) is an N6-glutaryllysine. Gln105 carries the N5-methylglutamine modification. At Lys119 the chain carries N6-(2-hydroxyisobutyryl)lysine; alternate. At Lys119 the chain carries N6-(beta-hydroxybutyryl)lysine; alternate. 2 positions are modified to N6-crotonyllysine; alternate: Lys119 and Lys120. An N6-glutaryllysine; alternate mark is found at Lys119 and Lys120. Lys120 participates in a covalent cross-link: Glycyl lysine isopeptide (Lys-Gly) (interchain with G-Cter in ubiquitin); alternate. At Thr121 the chain carries Phosphothreonine; by DCAF1. The residue at position 126 (Lys126) is an N6-crotonyllysine; alternate. Position 126 is an N6-glutaryllysine; alternate (Lys126).

The protein belongs to the histone H2A family. The nucleosome is a histone octamer containing two molecules each of H2A, H2B, H3 and H4 assembled in one H3-H4 heterotetramer and two H2A-H2B heterodimers. The octamer wraps approximately 147 bp of DNA. Post-translationally, deiminated on Arg-4 in granulocytes upon calcium entry. Monoubiquitination of Lys-120 (H2AK119Ub) by RING1, TRIM37 and RNF2/RING2 complex gives a specific tag for epigenetic transcriptional repression and participates in X chromosome inactivation of female mammals. It is involved in the initiation of both imprinted and random X inactivation. Ubiquitinated H2A is enriched in inactive X chromosome chromatin. Ubiquitination of H2A functions downstream of methylation of 'Lys-27' of histone H3 (H3K27me). H2AK119Ub by RNF2/RING2 can also be induced by ultraviolet and may be involved in DNA repair. Monoubiquitination of Lys-120 (H2AK119Ub) by TRIM37 may promote transformation of cells in a number of breast cancers. Following DNA double-strand breaks (DSBs), it is ubiquitinated through 'Lys-63' linkage of ubiquitin moieties by the E2 ligase UBE2N and the E3 ligases RNF8 and RNF168, leading to the recruitment of repair proteins to sites of DNA damage. Ubiquitination at Lys-14 and Lys-16 (H2AK13Ub and H2AK15Ub, respectively) in response to DNA damage is initiated by RNF168 that mediates monoubiquitination at these 2 sites, and 'Lys-63'-linked ubiquitin are then conjugated to monoubiquitin; RNF8 is able to extend 'Lys-63'-linked ubiquitin chains in vitro. Deubiquitinated by USP51 at Lys-14 and Lys-16 (H2AK13Ub and H2AK15Ub, respectively) after damaged DNA is repaired. H2AK119Ub and ionizing radiation-induced 'Lys-63'-linked ubiquitination (H2AK13Ub and H2AK15Ub) are distinct events. In terms of processing, phosphorylation on Ser-2 (H2AS1ph) is enhanced during mitosis. Phosphorylation on Ser-2 by RPS6KA5/MSK1 directly represses transcription. Acetylation of H3 inhibits Ser-2 phosphorylation by RPS6KA5/MSK1. Phosphorylation at Thr-121 (H2AT120ph) by DCAF1 is present in the regulatory region of many tumor suppresor genes and down-regulates their transcription. Post-translationally, glutamine methylation at Gln-105 (H2AQ104me) by FBL is specifically dedicated to polymerase I. It is present at 35S ribosomal DNA locus and impairs binding of the FACT complex. Symmetric dimethylation on Arg-4 by the PRDM1/PRMT5 complex may play a crucial role in the germ-cell lineage. In terms of processing, crotonylation (Kcr) is specifically present in male germ cells and marks testis-specific genes in post-meiotic cells, including X-linked genes that escape sex chromosome inactivation in haploid cells. Crotonylation marks active promoters and enhancers and confers resistance to transcriptional repressors. It is also associated with post-meiotically activated genes on autosomes. Post-translationally, lactylated in macrophages by EP300/P300 by using lactoyl-CoA directly derived from endogenous or exogenous lactate, leading to stimulates gene transcription.

It localises to the nucleus. The protein localises to the chromosome. Functionally, core component of nucleosome. Nucleosomes wrap and compact DNA into chromatin, limiting DNA accessibility to the cellular machineries which require DNA as a template. Histones thereby play a central role in transcription regulation, DNA repair, DNA replication and chromosomal stability. DNA accessibility is regulated via a complex set of post-translational modifications of histones, also called histone code, and nucleosome remodeling. The chain is Histone H2A type 1-H from Homo sapiens (Human).